Here is a 431-residue protein sequence, read N- to C-terminus: Alpha-gurjunene synthase (431 aa).

Positions 126 and 130 each coordinate Mg(2+). Arg-267 contributes to the (2E,6E)-farnesyl diphosphate binding site. Residues Asn-321 and Ser-325 each coordinate Mg(2+). Position 328 (Lys-328) interacts with (2E,6E)-farnesyl diphosphate. Glu-329 provides a ligand contact to Mg(2+). 412 to 413 lines the (2E,6E)-farnesyl diphosphate pocket; the sequence is RY.

It belongs to the terpene synthase family. Mg(2+) is required as a cofactor.

It catalyses the reaction (2E,6E)-farnesyl diphosphate = (-)-alpha-gurjunene + diphosphate. It carries out the reaction (2E,6E)-farnesyl diphosphate + H2O = 5-hydroxy-alpha-gurjunene + diphosphate. It functions in the pathway secondary metabolite biosynthesis; terpenoid biosynthesis. Its function is as follows. Catalyzes the conversion of (2E,6E)-farnesyl diphosphate (FPP) into the sesquiterpene alcohols (-)-alpha-gurjunene and 5-hydroxy-alpha-gurjunene. Other unidentified sesquiterpene alcohols found to be catalyzed by MTPSL4 may arise from carbocation reaction intermediates along the catalytic cascade to gurjunene being quenched by a water molecule, yielding formation of the alcohols. This chain is Alpha-gurjunene synthase, found in Marchantia polymorpha (Common liverwort).